We begin with the raw amino-acid sequence, 209 residues long: Thiamine-phosphate synthase (209 aa).

Residues 38–42 and Asn70 each bind 4-amino-2-methyl-5-(diphosphooxymethyl)pyrimidine; that span reads QYRAK. Asp71 and Asp90 together coordinate Mg(2+). A 4-amino-2-methyl-5-(diphosphooxymethyl)pyrimidine-binding site is contributed by Ser109. 135–137 is a binding site for 2-[(2R,5Z)-2-carboxy-4-methylthiazol-5(2H)-ylidene]ethyl phosphate; the sequence is TST. Lys138 is a 4-amino-2-methyl-5-(diphosphooxymethyl)pyrimidine binding site. 2-[(2R,5Z)-2-carboxy-4-methylthiazol-5(2H)-ylidene]ethyl phosphate-binding positions include Gly165 and 185–186; that span reads VS.

This sequence belongs to the thiamine-phosphate synthase family. Mg(2+) is required as a cofactor.

It carries out the reaction 2-[(2R,5Z)-2-carboxy-4-methylthiazol-5(2H)-ylidene]ethyl phosphate + 4-amino-2-methyl-5-(diphosphooxymethyl)pyrimidine + 2 H(+) = thiamine phosphate + CO2 + diphosphate. The catalysed reaction is 2-(2-carboxy-4-methylthiazol-5-yl)ethyl phosphate + 4-amino-2-methyl-5-(diphosphooxymethyl)pyrimidine + 2 H(+) = thiamine phosphate + CO2 + diphosphate. The enzyme catalyses 4-methyl-5-(2-phosphooxyethyl)-thiazole + 4-amino-2-methyl-5-(diphosphooxymethyl)pyrimidine + H(+) = thiamine phosphate + diphosphate. The protein operates within cofactor biosynthesis; thiamine diphosphate biosynthesis; thiamine phosphate from 4-amino-2-methyl-5-diphosphomethylpyrimidine and 4-methyl-5-(2-phosphoethyl)-thiazole: step 1/1. In terms of biological role, condenses 4-methyl-5-(beta-hydroxyethyl)thiazole monophosphate (THZ-P) and 2-methyl-4-amino-5-hydroxymethyl pyrimidine pyrophosphate (HMP-PP) to form thiamine monophosphate (TMP). The sequence is that of Thiamine-phosphate synthase from Persephonella marina (strain DSM 14350 / EX-H1).